The primary structure comprises 488 residues: UDP-N-acetylmuramate--L-alanine ligase (488 aa).

ATP is bound at residue 127–133; that stretch reads GTHGKTT.

It belongs to the MurCDEF family.

Its subcellular location is the cytoplasm. The enzyme catalyses UDP-N-acetyl-alpha-D-muramate + L-alanine + ATP = UDP-N-acetyl-alpha-D-muramoyl-L-alanine + ADP + phosphate + H(+). Its pathway is cell wall biogenesis; peptidoglycan biosynthesis. Cell wall formation. The chain is UDP-N-acetylmuramate--L-alanine ligase from Shewanella oneidensis (strain ATCC 700550 / JCM 31522 / CIP 106686 / LMG 19005 / NCIMB 14063 / MR-1).